The following is a 45-amino-acid chain: MVPLCEGDLWQELSLLAAGCRFPHLDEMVNIASINGRKVLGLELI.

This is an uncharacterized protein from Haemophilus influenzae (strain ATCC 51907 / DSM 11121 / KW20 / Rd).